Here is a 389-residue protein sequence, read N- to C-terminus: Fructose-1,6-bisphosphate aldolase/phosphatase (389 aa).

Residue aspartate 17 is the Proton acceptor; for FBP phosphatase activity of the active site. Mg(2+) contacts are provided by aspartate 17, histidine 24, aspartate 57, and aspartate 58. Histidine 24 is a beta-D-fructose 1,6-bisphosphate binding site. Residue histidine 24 participates in dihydroxyacetone phosphate binding. Residue tyrosine 95 participates in beta-D-fructose 1,6-bisphosphate binding. Glutamine 99 provides a ligand contact to Mg(2+). Beta-D-fructose 1,6-bisphosphate is bound at residue 108 to 109; sequence GN. Position 136 (aspartate 136) interacts with Mg(2+). Lysine 137 is a beta-D-fructose 1,6-bisphosphate binding site. Residue lysine 137 participates in dihydroxyacetone phosphate binding. Residue tyrosine 233 is the Proton donor/acceptor; for FBP aldolase activity of the active site. Mg(2+) is bound by residues lysine 236, aspartate 237, and aspartate 238. Lysine 236 acts as the Schiff-base intermediate with DHAP; for FBP aldolase activity in catalysis. Beta-D-fructose 1,6-bisphosphate contacts are provided by residues 246 to 247, arginine 270, aspartate 291, and tyrosine 352; that span reads QS. Dihydroxyacetone phosphate is bound by residues arginine 270 and aspartate 291.

Belongs to the FBP aldolase/phosphatase family. In terms of assembly, homooctamer; dimer of tetramers. Mg(2+) serves as cofactor.

It catalyses the reaction beta-D-fructose 1,6-bisphosphate + H2O = beta-D-fructose 6-phosphate + phosphate. It carries out the reaction beta-D-fructose 1,6-bisphosphate = D-glyceraldehyde 3-phosphate + dihydroxyacetone phosphate. It participates in carbohydrate biosynthesis; gluconeogenesis. In terms of biological role, catalyzes two subsequent steps in gluconeogenesis: the aldol condensation of dihydroxyacetone phosphate (DHAP) and glyceraldehyde-3-phosphate (GA3P) to fructose-1,6-bisphosphate (FBP), and the dephosphorylation of FBP to fructose-6-phosphate (F6P). This Methanocaldococcus jannaschii (strain ATCC 43067 / DSM 2661 / JAL-1 / JCM 10045 / NBRC 100440) (Methanococcus jannaschii) protein is Fructose-1,6-bisphosphate aldolase/phosphatase.